Here is a 494-residue protein sequence, read N- to C-terminus: Argininosuccinate lyase (494 aa).

This sequence belongs to the lyase 1 family. Argininosuccinate lyase subfamily.

Its subcellular location is the cytoplasm. The catalysed reaction is 2-(N(omega)-L-arginino)succinate = fumarate + L-arginine. Its pathway is amino-acid biosynthesis; L-arginine biosynthesis; L-arginine from L-ornithine and carbamoyl phosphate: step 3/3. The sequence is that of Argininosuccinate lyase from Methanosphaerula palustris (strain ATCC BAA-1556 / DSM 19958 / E1-9c).